We begin with the raw amino-acid sequence, 633 residues long: GRAM domain-containing protein 4 (633 aa).

Disordered regions lie at residues 1-46, 72-109, and 182-216; these read MGIA…VRPR, LAES…AGPG, and VLKA…RSQG. The segment covering 27–39 has biased composition (basic and acidic residues); the sequence is PWDKGLSGREPPR. Residues Ser-75 and Ser-79 each carry the phosphoserine modification. Positions 95-104 are enriched in basic and acidic residues; it reads SPRDSEELRD. Positions 134–190 form a coiled coil; sequence HLEIALLEKHFLQEELRKLREETNSEMLRQELDRERQRRIELEQKMQEVLKARSEEQ. Positions 190–205 are enriched in low complexity; sequence QPAQPQQPPKGQSQAS. 3 helical membrane-spanning segments follow: residues 295 to 315, 389 to 409, and 411 to 431; these read VYMN…LAIL, TTQK…FFPY, and LVGL…DFIF. One can recognise a GRAM domain in the interval 500–578; that stretch reads GNFHEIFNLT…MDITDIQKYK (79 aa).

Interacts with RTN4 (isoform B).

It localises to the mitochondrion membrane. The protein resides in the endoplasmic reticulum membrane. Plays a role as a mediator of E2F1-induced apoptosis in the absence of p53/TP53. Inhibits TLR9 response to nucelic acids and regulates TLR9-mediated innate immune response. In Mus musculus (Mouse), this protein is GRAM domain-containing protein 4.